The following is a 1219-amino-acid chain: Protein jagged-1 (1219 aa).

Positions 1 to 33 (MRSPRTRGRPGRPLSLLLALLCALRAKVCGASG) are cleaved as a signal peptide. The Extracellular portion of the chain corresponds to 34-1067 (QFELEILSMQ…QRRPLKNRTD (1034 aa)). N-linked (GlcNAc...) asparagine glycosylation is present at Asn-143. The region spanning 185 to 229 (VTCDDHYYGFGCNKFCRPRDDFFGHYACDQNGNKTCMEGWMGPEC) is the DSL domain. 2 disulfide bridges follow: Cys-187–Cys-196 and Cys-200–Cys-212. The segment at 199–207 (FCRPRDDFF) is important for interaction with NOTCH1. Asn-217 carries N-linked (GlcNAc...) asparagine glycosylation. 40 disulfide bridges follow: Cys-220-Cys-229, Cys-234-Cys-245, Cys-238-Cys-251, Cys-253-Cys-262, Cys-265-Cys-276, Cys-271-Cys-282, Cys-284-Cys-293, Cys-300-Cys-312, Cys-306-Cys-322, Cys-324-Cys-333, Cys-340-Cys-351, Cys-345-Cys-360, Cys-362-Cys-371, Cys-378-Cys-389, Cys-383-Cys-398, Cys-400-Cys-409, Cys-416-Cys-427, Cys-421-Cys-436, Cys-438-Cys-447, Cys-454-Cys-464, Cys-458-Cys-473, Cys-475-Cys-484, Cys-491-Cys-502, Cys-496-Cys-511, Cys-513-Cys-522, Cys-529-Cys-540, Cys-534-Cys-549, Cys-551-Cys-560, Cys-578-Cys-605, Cys-599-Cys-615, Cys-617-Cys-626, Cys-633-Cys-644, Cys-638-Cys-653, Cys-655-Cys-664, Cys-671-Cys-682, Cys-676-Cys-691, Cys-693-Cys-702, Cys-709-Cys-720, Cys-714-Cys-729, and Cys-731-Cys-740. Residues 230 to 263 (NKAICRQGCSPKHGSCKLPGDCRCQYGWQGLYCD) form the EGF-like 1 domain. Positions 264–294 (KCIPHPGCVHGTCNEPWQCLCETNWGGQLCD) constitute an EGF-like 2; atypical domain. 2 EGF-like domains span residues 296–334 (DLNY…PNCE) and 336–372 (AEHA…PTCS). The EGF-like 5; calcium-binding domain maps to 374–410 (NIDDCSPNNCSHGGTCQDLVNGFKCVCPPQWTGKTCQ). Residue Asn-382 is glycosylated (N-linked (GlcNAc...) asparagine). Residues 412–448 (DANECEAKPCVNARSCKNLIASYYCDCLPGWMGQNCD) form the EGF-like 6; calcium-binding domain. Positions 450–485 (NINDCLGQCQNDASCRDLVNGYRCICPPGYAGDHCE) constitute an EGF-like 7; calcium-binding domain. Residues 487-523 (DIDECASNPCLNGGHCQNEINRFQCLCPTGFSGNLCQ) form the EGF-like 8; calcium-binding domain. 2 EGF-like domains span residues 525-561 (DIDY…KNCS) and 586-627 (DTPE…TYCH). Asn-559 carries an N-linked (GlcNAc...) asparagine glycan. Residues 629–665 (NINDCEGNPCTNGGTCIDGVNSYKCICSDGWEGAHCE) enclose the EGF-like 11; calcium-binding domain. The EGF-like 12; calcium-binding domain maps to 667-703 (NINDCSQNPCHYGGTCRDLVNDFYCDCKNGWKGKTCH). EGF-like domains lie at 705-741 (RDSQ…TTCN) and 744-780 (RNSS…PICT). A glycan (N-linked (GlcNAc...) asparagine) is linked at Asn-745. 11 cysteine pairs are disulfide-bonded: Cys-748/Cys-759, Cys-753/Cys-768, Cys-770/Cys-779, Cys-786/Cys-797, Cys-791/Cys-806, Cys-808/Cys-817, Cys-824/Cys-835, Cys-829/Cys-844, Cys-846/Cys-855, Cys-925/Cys-936, and Cys-948/Cys-958. In terms of domain architecture, EGF-like 15; calcium-binding spans 782-818 (NTNDCSPHPCYNSGTCVDGDNWYRCECAPGFAGPDCR). Residues 820-856 (NINECQSSPCAFGATCVDEINGYQCICPPGHSGAKCH) form the EGF-like 16; calcium-binding domain. N-linked (GlcNAc...) asparagine glycans are attached at residues Asn-960, Asn-991, Asn-1045, and Asn-1064. A helical membrane pass occupies residues 1068 to 1093 (FLVPLLSSVLTVAWVCCLVTAFYWCV). Topologically, residues 1094 to 1219 (RKRRRKPSSH…QSLNRMEYIV (126 aa)) are cytoplasmic. The segment at 1182-1219 (REEKVPQRTPTKHPNWTNKQDNRDLESAQSLNRMEYIV) is disordered. Residues 1189–1200 (RTPTKHPNWTNK) show a composition bias toward polar residues.

Interacts with NOTCH1. Interacts with NOTCH2 and NOTCH3. Widely expressed in a variety of tissues.

The protein localises to the membrane. It is found in the cell membrane. Functionally, ligand for multiple Notch receptors and involved in the mediation of Notch signaling. May be involved in cell-fate decisions during hematopoiesis. Enhances fibroblast growth factor-induced angiogenesis (in vitro). Seems to be involved in early and late stages of mammalian cardiovascular development. Inhibits myoblast differentiation. May regulate fibroblast growth factor-induced angiogenesis. In Rattus norvegicus (Rat), this protein is Protein jagged-1 (Jag1).